The chain runs to 308 residues: Barttin (308 aa).

Over 1–5 the chain is Cytoplasmic; that stretch reads MADEK. The segment at 1-72 is regulates channel membrane trafficking and anion conductance; it reads MADEKTFRIG…VPADSDFQGM (72 aa). A helical transmembrane segment spans residues 6 to 26; it reads TFRIGFIVLGLFLLSLGTFLM. The Extracellular portion of the chain corresponds to 27–32; the sequence is SHDRPQ. Residues 33-53 form a helical membrane-spanning segment; sequence VYGTFYAMGSIMVIGGVLWSM. Residues Cys-54 and Cys-56 are each lipidated (S-palmitoyl cysteine). Residues 54–308 lie on the Cytoplasmic side of the membrane; it reads CQCYPKITFV…ELGFEPDVQG (255 aa). Ser-79 and Ser-107 each carry phosphoserine. Disordered regions lie at residues 127 to 149 and 162 to 308; these read PLLA…HSAQ and LDEK…DVQG. The span at 162-171 shows a compositional bias: basic and acidic residues; sequence LDEKEGEKSR. Polar residues predominate over residues 172–183; the sequence is SQSSPPACSQGS. Acidic residues predominate over residues 274 to 283; it reads EEPEQEEEDL. Ser-290 carries the post-translational modification Phosphoserine.

As to quaternary structure, interacts with CLCNK channels. Forms heteromers with CLCNKA in the thin ascending limb of Henle and with CLCNKB in the thick ascending limb and more distal segments. In terms of processing, palmitoylation is necessary for activation of plasma membrane-inserted CLC-K/barttin channels. As to expression, expressed along the distal nephron.

It is found in the basolateral cell membrane. In terms of biological role, regulatory subunit of anion-selective CLCNKA:BSND and CLCNKB:BSND heteromeric channels involved in basolateral chloride conductance along the nephron to achieve urine concentration and maintain systemic acid-base homeostasis, and in the stria vascularis of the inner ear to establish the endocochlear potential necessary for normal hearing. Most likely acts as a chaperone that allosterically regulates proper sorting of CLCNKA:BSND and CLCNKB:BSND channels at the basolateral plasma membrane domain and functional switch to ion conducting state. Mediates constitutive opening of channel common gates. This chain is Barttin, found in Rattus norvegicus (Rat).